A 336-amino-acid polypeptide reads, in one-letter code: Probable allantoicase 2 (336 aa).

It belongs to the allantoicase family.

It catalyses the reaction allantoate + H2O = (S)-ureidoglycolate + urea. It functions in the pathway nitrogen metabolism; (S)-allantoin degradation; (S)-ureidoglycolate from allantoate (aminidohydrolase route): step 1/1. The sequence is that of Probable allantoicase 2 from Burkholderia mallei (strain ATCC 23344).